Consider the following 314-residue polypeptide: Ribonuclease Z (314 aa).

Residues H63, H65, D67, H68, H142, D205, and H263 each contribute to the Zn(2+) site. D67 functions as the Proton acceptor in the catalytic mechanism.

Belongs to the RNase Z family. As to quaternary structure, homodimer. The cofactor is Zn(2+).

The catalysed reaction is Endonucleolytic cleavage of RNA, removing extra 3' nucleotides from tRNA precursor, generating 3' termini of tRNAs. A 3'-hydroxy group is left at the tRNA terminus and a 5'-phosphoryl group is left at the trailer molecule.. Functionally, zinc phosphodiesterase, which displays some tRNA 3'-processing endonuclease activity. Probably involved in tRNA maturation, by removing a 3'-trailer from precursor tRNA. The sequence is that of Ribonuclease Z from Kineococcus radiotolerans (strain ATCC BAA-149 / DSM 14245 / SRS30216).